The chain runs to 359 residues: 4-hydroxy-3-methylbut-2-en-1-yl diphosphate synthase (flavodoxin) (359 aa).

Residues Cys264, Cys267, Cys299, and Glu306 each coordinate [4Fe-4S] cluster.

It belongs to the IspG family. [4Fe-4S] cluster serves as cofactor.

It catalyses the reaction (2E)-4-hydroxy-3-methylbut-2-enyl diphosphate + oxidized [flavodoxin] + H2O + 2 H(+) = 2-C-methyl-D-erythritol 2,4-cyclic diphosphate + reduced [flavodoxin]. The protein operates within isoprenoid biosynthesis; isopentenyl diphosphate biosynthesis via DXP pathway; isopentenyl diphosphate from 1-deoxy-D-xylulose 5-phosphate: step 5/6. In terms of biological role, converts 2C-methyl-D-erythritol 2,4-cyclodiphosphate (ME-2,4cPP) into 1-hydroxy-2-methyl-2-(E)-butenyl 4-diphosphate. The protein is 4-hydroxy-3-methylbut-2-en-1-yl diphosphate synthase (flavodoxin) of Helicobacter pylori (strain J99 / ATCC 700824) (Campylobacter pylori J99).